A 341-amino-acid chain; its full sequence is Phenylalanine--tRNA ligase alpha subunit (341 aa).

E256 contacts Mg(2+).

The protein belongs to the class-II aminoacyl-tRNA synthetase family. Phe-tRNA synthetase alpha subunit type 1 subfamily. In terms of assembly, tetramer of two alpha and two beta subunits. Mg(2+) serves as cofactor.

Its subcellular location is the cytoplasm. The enzyme catalyses tRNA(Phe) + L-phenylalanine + ATP = L-phenylalanyl-tRNA(Phe) + AMP + diphosphate + H(+). The polypeptide is Phenylalanine--tRNA ligase alpha subunit (Chlamydia felis (strain Fe/C-56) (Chlamydophila felis)).